We begin with the raw amino-acid sequence, 463 residues long: HEPACAM family member 2 (463 aa).

A signal peptide spans 1 to 32 (MGQDAFMELLRSMVGLSLCKIHLLLIAGSCLG). Residues N86, N130, and N166 are each glycosylated (N-linked (GlcNAc...) asparagine). Ig-like C2-type domains lie at 150 to 234 (PMVQ…SDII) and 236 to 332 (PTIY…TRFT). 2 disulfides stabilise this stretch: C171-C220 and C271-C316. N-linked (GlcNAc...) asparagine glycosylation is present at N321. Residues 353–373 (LASITGISLFLIISMCLLFLW) traverse the membrane as a helical segment. At 374–463 (KKYQPYKAIR…IPEQQQENTE (90 aa)) the chain is on the cytoplasmic side.

In terms of processing, poly-ADP-ribosylated (PARsylated) by tankyrase TNKS during late G2 and prophase, leading to translocation to mitotic centrosomes. N-glycosylated.

The protein localises to the golgi apparatus membrane. Its subcellular location is the cytoplasm. It is found in the cytoskeleton. It localises to the spindle. The protein resides in the microtubule organizing center. The protein localises to the centrosome. Its subcellular location is the midbody. Required during prometaphase for centrosome maturation. Following poly-ADP-ribosylation (PARsylation) by TNKS, translocates from the Golgi apparatus to mitotic centrosomes and plays a key role in the formation of robust microtubules for prompt movement of chromosomes: anchors AKAP9/CG-NAP, a scaffold protein of the gamma-tubulin ring complex and promotes centrosome maturation. This is HEPACAM family member 2 (Hepacam2) from Mus musculus (Mouse).